The following is a 258-amino-acid chain: Phosphate import ATP-binding protein PstB (258 aa).

In terms of domain architecture, ABC transporter spans 5–253 (LDLNDVNIYY…PTKKETEDYI (249 aa)). Residue 37–44 (GPSGCGKS) coordinates ATP.

It belongs to the ABC transporter superfamily. Phosphate importer (TC 3.A.1.7) family. The complex is composed of two ATP-binding proteins (PstB), two transmembrane proteins (PstC and PstA) and a solute-binding protein (PstS).

It is found in the cell membrane. The enzyme catalyses phosphate(out) + ATP + H2O = ADP + 2 phosphate(in) + H(+). Its function is as follows. Part of the ABC transporter complex PstSACB involved in phosphate import. Responsible for energy coupling to the transport system. The protein is Phosphate import ATP-binding protein PstB of Corynebacterium jeikeium (strain K411).